Here is a 287-residue protein sequence, read N- to C-terminus: Bifunctional protein FolD (287 aa).

NADP(+) is bound by residues 165 to 167 (GRS), serine 190, and isoleucine 231.

This sequence belongs to the tetrahydrofolate dehydrogenase/cyclohydrolase family. Homodimer.

The catalysed reaction is (6R)-5,10-methylene-5,6,7,8-tetrahydrofolate + NADP(+) = (6R)-5,10-methenyltetrahydrofolate + NADPH. It catalyses the reaction (6R)-5,10-methenyltetrahydrofolate + H2O = (6R)-10-formyltetrahydrofolate + H(+). It participates in one-carbon metabolism; tetrahydrofolate interconversion. In terms of biological role, catalyzes the oxidation of 5,10-methylenetetrahydrofolate to 5,10-methenyltetrahydrofolate and then the hydrolysis of 5,10-methenyltetrahydrofolate to 10-formyltetrahydrofolate. This is Bifunctional protein FolD from Carboxydothermus hydrogenoformans (strain ATCC BAA-161 / DSM 6008 / Z-2901).